The following is a 390-amino-acid chain: Glutamate 5-kinase (390 aa).

Lysine 29 lines the ATP pocket. Positions 69, 156, and 168 each coordinate substrate. 188 to 189 (TD) is a binding site for ATP. The PUA domain occupies 295 to 374 (SGSLIVDAGA…EQFDRILGNN (80 aa)).

The protein belongs to the glutamate 5-kinase family.

The protein resides in the cytoplasm. The catalysed reaction is L-glutamate + ATP = L-glutamyl 5-phosphate + ADP. It functions in the pathway amino-acid biosynthesis; L-proline biosynthesis; L-glutamate 5-semialdehyde from L-glutamate: step 1/2. Its function is as follows. Catalyzes the transfer of a phosphate group to glutamate to form L-glutamate 5-phosphate. The protein is Glutamate 5-kinase of Psychrobacter cryohalolentis (strain ATCC BAA-1226 / DSM 17306 / VKM B-2378 / K5).